The chain runs to 515 residues: C-glycoside 3-oxidase (515 aa).

Residue Glu41 coordinates FAD. Basic and acidic residues predominate over residues 62–82; the sequence is ERAHAQRRSEGPHAREDDDRV. The interval 62–90 is disordered; sequence ERAHAQRRSEGPHAREDDDRVGGIVKSAQ. FAD contacts are provided by Ser118, Asn120, Met124, Thr129, Ala131, and Val237. The active-site Proton acceptor is the His444. The FAD site is built by Asn478 and Thr490.

It belongs to the GMC oxidoreductase family. As to quaternary structure, monomer. FAD serves as cofactor.

The catalysed reaction is isoorientin + O2 = 3''-dehydroisoorientin + H2O2. The enzyme catalyses mangiferin + O2 = 3'-dehydromangiferin + H2O2. In terms of biological role, FAD-dependent C-glycoside-metabolizing enzyme that participates in the degradation of certain C-glycosides by catalyzing the oxidation of the hydroxyl group at the C3 position of the sugar moiety. Shows oxidase activity toward C-glycosides such as isoorientin and mangiferin but cannot use carminic acid, puerarin, orientin or aloesin. Shows weak activity (100 to 1000-fold lower) with O-glycosides. Probably plays a crucial role in the metabolism of C-glycosides in nature. This is C-glycoside 3-oxidase from Microbacterium trichothecenolyticum (Aureobacterium trichothecenolyticum).